The sequence spans 27 residues: Pregnancy-associated glycoprotein 55 (27 aa).

It belongs to the peptidase A1 family. In terms of processing, glycosylated. As to expression, placenta.

This is Pregnancy-associated glycoprotein 55 (PAG55) from Capra hircus (Goat).